The primary structure comprises 414 residues: 3-phosphoshikimate 1-carboxyvinyltransferase (414 aa).

3-phosphoshikimate contacts are provided by K20, S21, and R25. K20 serves as a coordination point for phosphoenolpyruvate. Phosphoenolpyruvate contacts are provided by G85 and R113. The 3-phosphoshikimate site is built by S154, S155, Q156, S181, D296, and K323. Q156 contributes to the phosphoenolpyruvate binding site. D296 functions as the Proton acceptor in the catalytic mechanism. The phosphoenolpyruvate site is built by R327, R371, and K395.

It belongs to the EPSP synthase family. In terms of assembly, monomer.

It localises to the cytoplasm. It carries out the reaction 3-phosphoshikimate + phosphoenolpyruvate = 5-O-(1-carboxyvinyl)-3-phosphoshikimate + phosphate. Its pathway is metabolic intermediate biosynthesis; chorismate biosynthesis. Its function is as follows. Catalyzes the transfer of the enolpyruvyl moiety of phosphoenolpyruvate (PEP) to the 5-hydroxyl of shikimate-3-phosphate (S3P) to produce enolpyruvyl shikimate-3-phosphate and inorganic phosphate. This chain is 3-phosphoshikimate 1-carboxyvinyltransferase, found in Saccharolobus islandicus (strain Y.G.57.14 / Yellowstone #1) (Sulfolobus islandicus).